The chain runs to 220 residues: Ribosome maturation factor RimP (220 aa).

Over residues 1 to 15 (MSQRGRATRPTGPTG) the composition is skewed to low complexity. Disordered regions lie at residues 1-35 (MSQRGRATRPTGPTGRPRRTGGQRSAGRVSRGGDL) and 184-220 (PGRVQVEFTRPGETDGADGADEAGDFDDDDDVEGEER). The segment covering 198–220 (DGADGADEAGDFDDDDDVEGEER) has biased composition (acidic residues).

Belongs to the RimP family.

It is found in the cytoplasm. In terms of biological role, required for maturation of 30S ribosomal subunits. The polypeptide is Ribosome maturation factor RimP (Salinispora tropica (strain ATCC BAA-916 / DSM 44818 / JCM 13857 / NBRC 105044 / CNB-440)).